Reading from the N-terminus, the 331-residue chain is Vitamin B12 import system permease protein BtuC (331 aa).

The next 9 helical transmembrane spans lie at 20-42, 62-84, 91-113, 117-136, 148-170, 190-209, 240-262, 277-299, and 306-325; these read LLIG…WLSP, LLAA…VLLG, GVVG…FPSL, VAFM…LLVV, LLLV…FYFS, SWYQ…WLVL, LAIA…VGLV, LLLP…IARL, and LPLG…WMLV.

This sequence belongs to the binding-protein-dependent transport system permease family. FecCD subfamily. In terms of assembly, the complex is composed of two ATP-binding proteins (BtuD), two transmembrane proteins (BtuC) and a solute-binding protein (BtuF).

It localises to the cell inner membrane. Functionally, part of the ABC transporter complex BtuCDF involved in vitamin B12 import. Involved in the translocation of the substrate across the membrane. The protein is Vitamin B12 import system permease protein BtuC of Vibrio cholerae serotype O1 (strain ATCC 39315 / El Tor Inaba N16961).